The primary structure comprises 234 residues: Small ribosomal subunit protein uS2c (234 aa).

The protein belongs to the universal ribosomal protein uS2 family.

It is found in the plastid. The protein localises to the chloroplast. The sequence is that of Small ribosomal subunit protein uS2c (rps2) from Pinus koraiensis (Korean pine).